Here is a 1089-residue protein sequence, read N- to C-terminus: MAEAELHKERLQAIAEKRKRQTEIEGKRRQLDEQVLLLQHSKSKVLREKWLLQGVPAGTAEEEEARRRQSEEDEFKVKQLEDNIQRLEQEIQALESEESQISAKEQIILEKLKETEKSFKDLQKSFSTADGASGWSTVLLQGDELTADPIGTNADMAIQKPPQLSEDANQLRSKQDNCGDSRLEPAASSLSPDHKNMEIGVSVAECKSVPGVTSTPHSKDHSSPFYSPSHNGLLADHHESLDNDVAREIQYLDEVLEANCCDSSVDGTYNGISSPEPGAAILVSSLGSPAHSVTEAEPTEKASGRQVPPHIELSRSPSDRMAEGERANGHSTDQPQDLLGNSLQAPASPSSSTSSHCSSRDGEFTLTTLKKEAKFELRAFHEDKKPSKLFEEDEREKEQFCVRKVRPSEEMIELEKERRELIRSQAVKKNPGIAAKWWNPPQEKTIEEQLDEEHLESHRKYKERKEKRAQQEQLQLQQQQQQQLQQQQLQQQQLQQQQLQQQLQQQQLSTSQPCTAPAAHKHLDGIEHTKEDVVTEQIDFSAARKQFQLMENSRQTLAKGQSTPRLFSIKPYYKPLGSIHSDKPPTILRPATVGGTLEDGGTQAAKEQKAPCVSESQSAGAGPANAATQGKEGPYSEPSKRGPLSKLWAEDGEFTSARAVLTVVKDEDHGILDQFSRSVNVSLTQEELDSGLDELSVRSQDTTVLETLSNDFSMDNISDSGASNETPSALQENSLADFSLPQTPQTDNPSEGREGVSKSFSDHGFYSPSSTLGDSPSVDDPLEYQAGLLVQNAIQQAIAEQVDKAEAHTSKEGSEQQEPEATVEEAGSQTPGSEKPQGMFAPPQVSSPVQEKRDILPKNLPAEDRALREKGPSQPPTAAQPSGPVNMEETRPEGGYFSKYSEAAELRSTASLLATQESDVMVGPFKLRSRKQRTLSMIEEEIRAAQEREEELKRQRQVRQSTPSPRAKNAPSLPSRTTCYKTAPGKIEKVKPPPSPTTEGPSLQPDLAPEEAAGTQRPKNLMQTLMEDYETHKSKRRERMDDSSYTSKLLSCKVTSEVLEATRVNRRKSALALRWEAGIYANQEEEDNE.

Residues 70 to 107 (SEEDEFKVKQLEDNIQRLEQEIQALESEESQISAKEQI) adopt a coiled-coil conformation. Disordered stretches follow at residues 165–194 (SEDA…SPDH), 210–231 (PGVT…PSHN), and 289–362 (PAHS…SRDG). Positions 173-183 (SKQDNCGDSRL) are enriched in basic and acidic residues. Arg315 and Ser318 each carry phosphoserine. Over residues 317-328 (PSDRMAEGERAN) the composition is skewed to basic and acidic residues. Residues 329 to 347 (GHSTDQPQDLLGNSLQAPA) show a composition bias toward polar residues. A Phosphoserine modification is found at Ser348. The span at 348-357 (SPSSSTSSHC) shows a compositional bias: low complexity. A Glycyl lysine isopeptide (Lys-Gly) (interchain with G-Cter in SUMO1); alternate cross-link involves residue Lys370. A Glycyl lysine isopeptide (Lys-Gly) (interchain with G-Cter in SUMO2); alternate cross-link involves residue Lys370. Residues 429-517 (KNPGIAAKWW…LSTSQPCTAP (89 aa)) are disordered. Residues 455 to 470 (LESHRKYKERKEKRAQ) are compositionally biased toward basic and acidic residues. Residues 471-508 (QEQLQLQQQQQQQLQQQQLQQQQLQQQQLQQQLQQQQL) show a composition bias toward low complexity. Ser553 is subject to Phosphoserine. The disordered stretch occupies residues 592-644 (TVGGTLEDGGTQAAKEQKAPCVSESQSAGAGPANAATQGKEGPYSEPSKRGPL). Phosphoserine occurs at positions 678, 682, and 734. The span at 712–749 (FSMDNISDSGASNETPSALQENSLADFSLPQTPQTDNP) shows a compositional bias: polar residues. 3 disordered regions span residues 712-783 (FSMD…DPLE), 800-899 (EQVD…YFSK), and 915-934 (TQES…KQRT). Phosphothreonine is present on Thr743. Positions 782-795 (LEYQAGLLVQNAIQ) are PKA-RII subunit binding domain. Positions 801–814 (QVDKAEAHTSKEGS) are enriched in basic and acidic residues. Phosphoserine is present on Ser847. The segment covering 850–871 (QEKRDILPKNLPAEDRALREKG) has biased composition (basic and acidic residues). Residues 928–958 (RSRKQRTLSMIEEEIRAAQEREEELKRQRQV) are a coiled coil. Ser936, Ser964, Ser995, and Ser1002 each carry phosphoserine. Residues 946–1021 (QEREEELKRQ…AAGTQRPKNL (76 aa)) are disordered.

As to expression, highly expressed in lung and weakly in thymus and cerebellum. Little or no expression in liver, heart and cerebral cortex. All isoforms are expressed in lung, but KL2A and KL2B isoforms are the principal isoforms in cerebellum.

The protein localises to the apical cell membrane. In terms of biological role, binds to regulatory subunit (RII) of protein kinase A. May be involved in establishing polarity in signaling systems or in integrating PKA-RII isoforms with downstream effectors to capture, amplify and focus diffuse, trans-cellular signals carried by cAMP. Binds tp and modulates the structure of the actin cytoskeleton. The chain is PALM2-AKAP2 fusion protein from Mus musculus (Mouse).